Consider the following 365-residue polypeptide: Eukaryotic translation initiation factor 3 subunit H (365 aa).

Positions 11-160 (VKVEALVVMK…LRAFRLSPKF (150 aa)) constitute an MPN domain.

The protein belongs to the eIF-3 subunit H family. As to quaternary structure, component of the eukaryotic translation initiation factor 3 (eIF-3) complex.

It is found in the cytoplasm. Its function is as follows. Component of the eukaryotic translation initiation factor 3 (eIF-3) complex, which is involved in protein synthesis of a specialized repertoire of mRNAs and, together with other initiation factors, stimulates binding of mRNA and methionyl-tRNAi to the 40S ribosome. The eIF-3 complex specifically targets and initiates translation of a subset of mRNAs involved in cell proliferation. The polypeptide is Eukaryotic translation initiation factor 3 subunit H (Aspergillus clavatus (strain ATCC 1007 / CBS 513.65 / DSM 816 / NCTC 3887 / NRRL 1 / QM 1276 / 107)).